The chain runs to 24 residues: Attacin (24 aa).

This sequence belongs to the attacin/sarcotoxin-2 family.

It is found in the secreted. Functionally, hemolymph antibacterial protein. This chain is Attacin, found in Heliothis virescens (Tobacco budworm moth).